The following is a 197-amino-acid chain: Recombination protein RecR (197 aa).

Residues 57–72 (CSVCFAITEDDPCWIC) form a C4-type zinc finger. The Toprim domain maps to 79–174 (GTICVVEEPQ…KVTRLAHGIP (96 aa)).

This sequence belongs to the RecR family.

May play a role in DNA repair. It seems to be involved in an RecBC-independent recombinational process of DNA repair. It may act with RecF and RecO. The sequence is that of Recombination protein RecR from Citrifermentans bemidjiense (strain ATCC BAA-1014 / DSM 16622 / JCM 12645 / Bem) (Geobacter bemidjiensis).